The sequence spans 87 residues: Chromosomal protein MC1b (87 aa).

Its function is as follows. Protects DNA against thermal denaturation and modulates transcription. This is Chromosomal protein MC1b from Methanothrix soehngenii (Methanosaeta concilii).